A 563-amino-acid chain; its full sequence is O-fucosyltransferase 14 (563 aa).

Residues 1-16 (MVKVSSSTTSSSSSSS) are compositionally biased toward low complexity. The segment at 1–25 (MVKVSSSTTSSSSSSSPDEESDLQN) is disordered. Residues 73–93 (IFIFLPIVIILIYLSTDFSNY) traverse the membrane as a helical; Signal-anchor for type II membrane protein segment. Asparagine 135, asparagine 140, and asparagine 339 each carry an N-linked (GlcNAc...) asparagine glycan. Substrate contacts are provided by residues 412 to 414 (HFR) and 528 to 529 (TF).

It belongs to the glycosyltransferase GT106 family.

The protein localises to the membrane. It participates in glycan metabolism. This chain is O-fucosyltransferase 14, found in Arabidopsis thaliana (Mouse-ear cress).